We begin with the raw amino-acid sequence, 361 residues long: Phosphoserine aminotransferase (361 aa).

Residue Arg42 participates in L-glutamate binding. Residues 76-77 (AT), Trp102, Thr152, Asp172, and Gln195 each bind pyridoxal 5'-phosphate. N6-(pyridoxal phosphate)lysine is present on Lys196. 237–238 (NT) serves as a coordination point for pyridoxal 5'-phosphate.

It belongs to the class-V pyridoxal-phosphate-dependent aminotransferase family. SerC subfamily. As to quaternary structure, homodimer. It depends on pyridoxal 5'-phosphate as a cofactor.

It is found in the cytoplasm. It catalyses the reaction O-phospho-L-serine + 2-oxoglutarate = 3-phosphooxypyruvate + L-glutamate. The catalysed reaction is 4-(phosphooxy)-L-threonine + 2-oxoglutarate = (R)-3-hydroxy-2-oxo-4-phosphooxybutanoate + L-glutamate. It functions in the pathway amino-acid biosynthesis; L-serine biosynthesis; L-serine from 3-phospho-D-glycerate: step 2/3. It participates in cofactor biosynthesis; pyridoxine 5'-phosphate biosynthesis; pyridoxine 5'-phosphate from D-erythrose 4-phosphate: step 3/5. Functionally, catalyzes the reversible conversion of 3-phosphohydroxypyruvate to phosphoserine and of 3-hydroxy-2-oxo-4-phosphonooxybutanoate to phosphohydroxythreonine. This chain is Phosphoserine aminotransferase, found in Xanthomonas campestris pv. campestris (strain B100).